A 298-amino-acid polypeptide reads, in one-letter code: Probable endonuclease 4 (298 aa).

Positions 69, 111, 146, 180, 183, 215, 228, 230, and 260 each coordinate Zn(2+).

Belongs to the AP endonuclease 2 family. The cofactor is Zn(2+).

The catalysed reaction is Endonucleolytic cleavage to 5'-phosphooligonucleotide end-products.. In terms of biological role, endonuclease IV plays a role in DNA repair. It cleaves phosphodiester bonds at apurinic or apyrimidinic (AP) sites, generating a 3'-hydroxyl group and a 5'-terminal sugar phosphate. This is Probable endonuclease 4 from Bacillus cytotoxicus (strain DSM 22905 / CIP 110041 / 391-98 / NVH 391-98).